A 397-amino-acid chain; its full sequence is Elongation factor Tu (397 aa).

Positions 10–207 constitute a tr-type G domain; the sequence is KPHVNVGTIG…TLDAYIPEPE (198 aa). Residues 19–26 form a G1 region; sequence GHVDHGKT. 19–26 is a binding site for GTP; sequence GHVDHGKT. Threonine 26 is a Mg(2+) binding site. The interval 60–64 is G2; the sequence is GITIA. Residues 81-84 are G3; that stretch reads DCPG. Residues 81 to 85 and 136 to 139 each bind GTP; these read DCPGH and NKAD. Residues 136–139 form a G4 region; the sequence is NKAD. The G5 stretch occupies residues 174 to 176; sequence SAL.

This sequence belongs to the TRAFAC class translation factor GTPase superfamily. Classic translation factor GTPase family. EF-Tu/EF-1A subfamily. Monomer.

It is found in the cytoplasm. It carries out the reaction GTP + H2O = GDP + phosphate + H(+). Functionally, GTP hydrolase that promotes the GTP-dependent binding of aminoacyl-tRNA to the A-site of ribosomes during protein biosynthesis. In Hahella chejuensis (strain KCTC 2396), this protein is Elongation factor Tu.